Here is a 112-residue protein sequence, read N- to C-terminus: UPF0102 protein Spea_0251 (112 aa).

Belongs to the UPF0102 family.

The polypeptide is UPF0102 protein Spea_0251 (Shewanella pealeana (strain ATCC 700345 / ANG-SQ1)).